Here is an 806-residue protein sequence, read N- to C-terminus: Volume-regulated anion channel subunit LRRC8E (806 aa).

The Cytoplasmic segment spans residues 1-22 (MIPVAEFKQFTEQQPAFKVLKP). Residues 23–43 (WWDVLAEYITYAMLMIGVFGC) traverse the membrane as a helical segment. At 44-130 (TLQVTQDKII…YETALHWYAK (87 aa)) the chain is on the extracellular side. A disulfide bridge links C54 with C311. 2 N-linked (GlcNAc...) asparagine glycosylation sites follow: N57 and N80. The disordered stretch occupies residues 75–104 (QSSASNDSDLETTVPPPTATSSPPREMSGL). Residues 131–151 (YFPYLVVIHTLIFIICGNFWF) form a helical membrane-spanning segment. Topologically, residues 152–275 (KFPGTSSKIE…MRQTVLKVCK (124 aa)) are cytoplasmic. The disordered stretch occupies residues 182 to 217 (EVSGESSQEKPNQERSIDRELSKPNFEEGSPATADL). Positions 188 to 207 (SQEKPNQERSIDRELSKPNF) are enriched in basic and acidic residues. A helical membrane pass occupies residues 276–296 (FVLITIYNAVLVGKIHFIVPC). Residues 297–323 (SVHTEDMTGYNSFCCNHTKAHLFSKLA) are Extracellular-facing. N-linked (GlcNAc...) asparagine glycosylation occurs at N312. Residues 324-344 (ISYLCFLGVYGLTCFYTLYWL) form a helical membrane-spanning segment. The Cytoplasmic portion of the chain corresponds to 345–806 (FRRPLKEYSF…VDVRDKFKED (462 aa)). LRR repeat units lie at residues 569–589 (HLQK…NALK), 593–614 (LVKE…VFSL), 616–637 (NLQV…ISLQ), 641–662 (KLSV…IRKL), 664–685 (GLEE…LFLC), 687–708 (KLRH…IGVL), 710–731 (LLQY…LFFC), 733–754 (KLKT…VGSL), and 756–777 (CLVK…IGNC).

The protein belongs to the LRRC8 family. In terms of assembly, heterohexamer; oligomerizes with other LRRC8 proteins (lrrc8a, lrrc8c, lrrc8d and/or lrrc8b) to form a heterohexamer. Detected in a channel complex that contains lrrc8a, lrrc8c and lrrc8e. In vivo, the subunit composition may depend primarily on expression levels, and heterooligomeric channels containing various proportions of the different LRRC8 proteins may coexist.

Its subcellular location is the cell membrane. The protein localises to the endoplasmic reticulum membrane. It localises to the lysosome membrane. The catalysed reaction is chloride(in) = chloride(out). It catalyses the reaction iodide(out) = iodide(in). It carries out the reaction taurine(out) = taurine(in). The enzyme catalyses 2',3'-cGAMP(out) = 2',3'-cGAMP(in). Non-essential component of the volume-regulated anion channel (VRAC, also named VSOAC channel), an anion channel required to maintain a constant cell volume in response to extracellular or intracellular osmotic changes. The VRAC channel conducts iodide better than chloride and can also conduct organic osmolytes like taurine. Mediates efflux of amino acids, such as aspartate, in response to osmotic stress. The VRAC channel also mediates transport of immunoreactive cyclic dinucleotide GMP-AMP (2'-3'-cGAMP), an immune messenger produced in response to DNA virus in the cytosol. Channel activity requires lrrc8a plus at least one other family member (lrrc8b, lrrc8c, lrrc8d or lrrc8e); channel characteristics depend on the precise subunit composition. Also plays a role in lysosome homeostasis by forming functional lysosomal VRAC channels in response to low cytoplasmic ionic strength condition: lysosomal VRAC channels are necessary for the formation of large lysosome-derived vacuoles, which store and then expel excess water to maintain cytosolic water homeostasis. This is Volume-regulated anion channel subunit LRRC8E from Xenopus laevis (African clawed frog).